We begin with the raw amino-acid sequence, 1135 residues long: Envelopment polyprotein (1135 aa).

An N-terminal signal peptide occupies residues 1–35 (MRILKLLELVVKVSLFTIALSSVLLAFLTFRATDA). Over 36-314 (KVEIIRGDHP…KYSKSIYKQT (279 aa)) the chain is Lumenal. The Cell attachment site signature appears at 41–43 (RGD). An N-linked (GlcNAc...) asparagine; by host glycan is attached at Asn116. Cysteines 122 and 156 form a disulfide. Positions 177-195 (LDNKRHFSVGTNFFIPESL) are non-covalent dimerization. N-linked (GlcNAc...) asparagine; by host glycosylation occurs at Asn210. Cys224 and Cys285 are joined by a disulfide. The helical transmembrane segment at 315-366 (ACINFSWIRLILIALLIYFPIRWLVNKTTKPLFLWYDLMGLITYPVLLLINC) threads the bilayer. Over 367–484 (LWKYFPFKCS…VPGCPFLVTS (118 aa)) the chain is Cytoplasmic. The tract at residues 437–484 (LSLSLLKFVTEILIGLVILSQIPMSMAQTTQCLSGCFYVPGCPFLVTS) is signal for signal peptide peptidase. At 485-1067 (KFEKCPEKDQ…YFGSFFDTIR (583 aa)) the chain is on the lumenal side. N-linked (GlcNAc...) asparagine; by host glycosylation is found at Asn588, Asn605, and Asn980. The chain crosses the membrane as a helical span at residues 1068 to 1088 (VVLLIAFIFLVIYFCSILTSI). Residues 1089–1135 (CKGYVKHKSYKSRSKIEDDDEPEIKAPMLMKDTMTRRRPPMDFSHLV) are Cytoplasmic-facing.

This sequence belongs to the tospovirus envelope glycoprotein family. Homodimer; disulfide-linked. Heterodimer with Glycoprotein C. Interacts with nucleoprotein. As to quaternary structure, heterodimer with Glycoprotein N. Interacts with nucleoprotein. Specific enzymatic cleavages in vivo yield mature proteins including Glycoprotein N and Glycoprotein C. In terms of processing, glycosylated with O-linked glycans. Glycosylation is essential for proper subcellular location. Post-translationally, cleaved at acidic pH.

The protein resides in the virion membrane. It localises to the host Golgi apparatus membrane. The protein localises to the host endoplasmic reticulum membrane. Forms the spikes present at the surface of the virion together with Glycoprotein C. They are able to attach the virion to a cell receptor and to promote fusion of membranes after endocytosis of the virion. Plays a role in virus binding and/or entry into the vector midgut. Its function is as follows. Forms the spikes present at the surface of the virion together with Glycoprotein N. They are able to attach the virion to a cell receptor and to promote fusion of membranes after endocytosis of the virion. Probable class II fusion protein. In Frankliniella occidentalis (Western flower thrips), this protein is Envelopment polyprotein (GP).